The sequence spans 563 residues: Membrane protein insertase YidC (563 aa).

A helical membrane pass occupies residues 1-21; the sequence is MDIKRTILIVALAIVTYVGVL. The tract at residues 43–62 is disordered; sequence APGIPDTAAGTNGSASADVP. 5 helical membrane-spanning segments follow: residues 344–364, 370–390, 440–460, 471–491, and 518–538; these read LELT…FWLL, ILGN…GLFF, LGGC…YWVL, WILW…PIIM, and PIIF…YWVV.

The protein belongs to the OXA1/ALB3/YidC family. Type 1 subfamily. As to quaternary structure, interacts with the Sec translocase complex via SecD. Specifically interacts with transmembrane segments of nascent integral membrane proteins during membrane integration.

Its subcellular location is the cell inner membrane. In terms of biological role, required for the insertion and/or proper folding and/or complex formation of integral membrane proteins into the membrane. Involved in integration of membrane proteins that insert both dependently and independently of the Sec translocase complex, as well as at least some lipoproteins. Aids folding of multispanning membrane proteins. The sequence is that of Membrane protein insertase YidC from Pseudomonas savastanoi pv. phaseolicola (strain 1448A / Race 6) (Pseudomonas syringae pv. phaseolicola (strain 1448A / Race 6)).